Consider the following 106-residue polypeptide: Small ribosomal subunit protein bS20 (106 aa).

Positions 1-20 (MATAKPKKKNPRLASGRKRV) are enriched in basic residues. A disordered region spans residues 1-21 (MATAKPKKKNPRLASGRKRVR).

This sequence belongs to the bacterial ribosomal protein bS20 family.

In terms of biological role, binds directly to 16S ribosomal RNA. The polypeptide is Small ribosomal subunit protein bS20 (Polaromonas naphthalenivorans (strain CJ2)).